Reading from the N-terminus, the 201-residue chain is Large ribosomal subunit protein uL4 (201 aa).

Residues 45–71 are disordered; that stretch reads AQKTRAEVTGSGKKPWRQKGTGRARAG.

Belongs to the universal ribosomal protein uL4 family. Part of the 50S ribosomal subunit.

One of the primary rRNA binding proteins, this protein initially binds near the 5'-end of the 23S rRNA. It is important during the early stages of 50S assembly. It makes multiple contacts with different domains of the 23S rRNA in the assembled 50S subunit and ribosome. Functionally, forms part of the polypeptide exit tunnel. This is Large ribosomal subunit protein uL4 from Shewanella pealeana (strain ATCC 700345 / ANG-SQ1).